A 203-amino-acid chain; its full sequence is Small ribosomal subunit protein uS4 (203 aa).

Positions 93 to 156 constitute an S4 RNA-binding domain; the sequence is QRLDNVVFRL…MKVPAILEAV (64 aa).

It belongs to the universal ribosomal protein uS4 family. In terms of assembly, part of the 30S ribosomal subunit. Contacts protein S5. The interaction surface between S4 and S5 is involved in control of translational fidelity.

Its function is as follows. One of the primary rRNA binding proteins, it binds directly to 16S rRNA where it nucleates assembly of the body of the 30S subunit. In terms of biological role, with S5 and S12 plays an important role in translational accuracy. This chain is Small ribosomal subunit protein uS4, found in Lactococcus lactis subsp. lactis (strain IL1403) (Streptococcus lactis).